The sequence spans 626 residues: E3 ubiquitin-protein ligase HRD1 (626 aa).

Residues Met1–Ala15 form the signal peptide. The Lumenal portion of the chain corresponds to Val16–Asn38. Residues Ala39–Leu59 form a helical membrane-spanning segment. Over Ser60 to Asp96 the chain is Cytoplasmic. A helical transmembrane segment spans residues Phe97–Leu117. The Lumenal segment spans residues Ala118–Ser128. The helical transmembrane segment at Pro129–Leu149 threads the bilayer. Topologically, residues Asp150 to Thr167 are cytoplasmic. A helical membrane pass occupies residues Val168–Ile188. Topologically, residues Lys189–Val222 are lumenal. Residues Val223–Phe243 traverse the membrane as a helical segment. The segment at Lys234–Arg268 is interaction with p53/TP53. The Cytoplasmic segment spans residues Arg244–Glu626. An RING-type; atypical zinc finger spans residues Cys289–Arg328. Residues Asp569 to Gly600 are disordered. The span at Ser577–Asn587 shows a compositional bias: polar residues.

It belongs to the HRD1 family. Homodimer. Interacts with p53. May interact with Septin2.

It is found in the endoplasmic reticulum membrane. The enzyme catalyses S-ubiquitinyl-[E2 ubiquitin-conjugating enzyme]-L-cysteine + [acceptor protein]-L-lysine = [E2 ubiquitin-conjugating enzyme]-L-cysteine + N(6)-ubiquitinyl-[acceptor protein]-L-lysine.. It functions in the pathway protein modification; protein ubiquitination. Acts as an E3 ubiquitin-protein ligase which accepts ubiquitin specifically from endoplasmic reticulum-associated UBC7 E2 ligase and transfers it to substrates, promoting their degradation. Component of the endoplasmic reticulum quality control (ERQC) system also called ER-associated degradation (ERAD) involved in ubiquitin-dependent degradation of misfolded endoplasmic reticulum proteins. Also promotes the degradation of normal but naturally short-lived proteins. Protects cells from ER stress-induced apoptosis. Sequesters p53 in the cytoplasm and promotes its degradation, thereby negatively regulating its biological function in transcription, cell cycle regulation and apoptosis. The chain is E3 ubiquitin-protein ligase HRD1 (sip3) from Drosophila melanogaster (Fruit fly).